A 319-amino-acid polypeptide reads, in one-letter code: ATP-dependent 6-phosphofructokinase (319 aa).

ATP is bound at residue glycine 11. Residue 21–25 participates in ADP binding; that stretch reads RAVVR. Residues 72 to 73 and 102 to 105 contribute to the ATP site; these read RC and GDGS. Mg(2+) is bound at residue aspartate 103. Residue 125 to 127 participates in substrate binding; that stretch reads TID. The Proton acceptor role is filled by aspartate 127. Residue arginine 154 coordinates ADP. Substrate-binding positions include arginine 162 and 169-171; that span reads MGR. Residues 185 to 187, arginine 211, and 213 to 215 contribute to the ADP site; these read GAE and KKH. Substrate contacts are provided by residues glutamate 222, arginine 243, and 249 to 252; that span reads HIQR.

It belongs to the phosphofructokinase type A (PFKA) family. ATP-dependent PFK group I subfamily. Prokaryotic clade 'B1' sub-subfamily. In terms of assembly, homotetramer. The cofactor is Mg(2+).

It is found in the cytoplasm. The enzyme catalyses beta-D-fructose 6-phosphate + ATP = beta-D-fructose 1,6-bisphosphate + ADP + H(+). Its pathway is carbohydrate degradation; glycolysis; D-glyceraldehyde 3-phosphate and glycerone phosphate from D-glucose: step 3/4. With respect to regulation, allosterically activated by ADP and other diphosphonucleosides, and allosterically inhibited by phosphoenolpyruvate. In terms of biological role, catalyzes the phosphorylation of D-fructose 6-phosphate to fructose 1,6-bisphosphate by ATP, the first committing step of glycolysis. This is ATP-dependent 6-phosphofructokinase from Shouchella clausii (strain KSM-K16) (Alkalihalobacillus clausii).